The chain runs to 524 residues: Na(+)/H(+) antiporter NhaB (524 aa).

9 consecutive transmembrane segments (helical) span residues 13–33 (FLGN…IINP), 98–118 (LLLV…LFVF), 140–160 (AFLS…SVSV), 239–259 (FFIR…LVCL), 304–324 (AIIG…VGLV), 325–345 (GLSV…HSLG), 358–378 (LTVF…TPII), 448–468 (ATPN…APLI), and 479–499 (ALPY…FLLV).

Belongs to the NhaB Na(+)/H(+) (TC 2.A.34) antiporter family.

The protein localises to the cell inner membrane. The enzyme catalyses 2 Na(+)(in) + 3 H(+)(out) = 2 Na(+)(out) + 3 H(+)(in). Its function is as follows. Na(+)/H(+) antiporter that extrudes sodium in exchange for external protons. The sequence is that of Na(+)/H(+) antiporter NhaB from Yersinia pseudotuberculosis serotype I (strain IP32953).